We begin with the raw amino-acid sequence, 792 residues long: MSTVPAKGPLTPQQLSLINRYWRAANYLSVGQIYLMKNPLLREPLQPEHIKPRLLGHWGTTPGLNFIYAHLNRIIQQRNANVIYICGPGHGGPGMVANTYLEGTYSEIYPAISEDEAGMERLFRQFSFPGGIPSHAAPETPGSIHEGGELGYALVHAYGAAFDNPDLVVACVVGDGEAETGALATSWHSNKFLNPARDGAVLPILHLNGYKIANPTVLARLSDDDLDNLFRGYGYEPFFVEGSEPADMHQKMAATLDTIFQRIQDIKKNADVHSPERPRWPMIILRSPKGWTGPKTVDGLVVENYWRAHQVPVANCRENDAHRKILEDWMKSYDPSDLFDEKGALKPELRALAPKGEARIGANPHANGGLLRKELHMPDFRQYAVNVTEPGAIEAQSTKILGDFLRDVMKLNETEKNFRIFGPDETASNRLGSVLEATNRVWMAETLDMDDHLAADGRVMEVLSEHLCQGWLEGYLLSGRHGFFSCYEAFIHIIDSMFNQHAKWLQVARELEWRKPISSLNYLLTSHVWRQDHNGFSHQDPGFVDLVANKSADIARVYFPPDANTLLWVGDHCLKTWNRVNVIVAGKQPEPQWLTMAEAEKHCEAGLGIWEWAGTEDGLEPDIVMACAGDVPTMETLAAVDLLRQSLPHLRIRVVNVVDLMVLQSPHQHPHGISDEEFDRMFTTNRPVIFAYHGYPYLIHRLVYKRTNHSNFHVRGFIEQGTTTTPFDMTVLNELDRFHLAMEAVERLPLGESVAKPLIDNFTEKLALHKDYIRQHGEDMPEIRDWKWTWPR.

It belongs to the XFP family. It depends on thiamine diphosphate as a cofactor.

This Brucella melitensis biotype 1 (strain ATCC 23456 / CCUG 17765 / NCTC 10094 / 16M) protein is Probable phosphoketolase.